A 318-amino-acid polypeptide reads, in one-letter code: Protein-L-histidine N-pros-methyltransferase (318 aa).

An N-terminal signal peptide occupies residues 1 to 18 (MRLLAGWLCLSLASVWLA). N-linked (GlcNAc...) asparagine glycosylation is present at N35. Positions 174, 210, and 295 each coordinate S-adenosyl-L-homocysteine.

The protein belongs to the METTL9 family. In terms of tissue distribution, expressed in liver, colon, small intestine, skin, kidney and to a lesser extent in spleen, lung, thymus and stomach. Not detected in fibroblast and endothelial cells.

It is found in the endoplasmic reticulum. Its subcellular location is the mitochondrion. The enzyme catalyses L-histidyl-[protein] + S-adenosyl-L-methionine = N(pros)-methyl-L-histidyl-[protein] + S-adenosyl-L-homocysteine + H(+). In terms of biological role, protein-histidine N-methyltransferase that specifically catalyzes 1-methylhistidine (pros-methylhistidine) methylation of target proteins. Specifically methylates the second His of proteins with a His-x-His (HxH) motif (where 'x' is preferably a small amino acid), while exploiting the first one as a recognition signature. Catalyzes methylation of target proteins such as S100A9, NDUFB3, SLC39A5, SLC39A7, ARMC6 and DNAJB12; 1-methylhistidine modification may affect the binding of zinc and other metals to its target proteins. Constitutes the main methyltransferase for the 1-methylhistidine modification in cell. The chain is Protein-L-histidine N-pros-methyltransferase from Mus musculus (Mouse).